The chain runs to 377 residues: MTTENAAIPTKKKKSFWKKMKPLFGLTVLIPTAFSAVYFGLFASDIYVSESSFVVRSPRSQSSLSGVGALLQSTGFSRSQDDTYSVQEYMRSRTALSALEQGLPLRTFYSEKGDLLSRFNGFGLNDTQEAFYRYFKERLSVDVDSISGIATLRVHAFDAEEGYQINERLLKEGESLINRLNERARKDTIEFAEQAVKDAEKNVNETAQALSQYRIKNKIFDLPAQSGVQLSLISSLKSELIRVETQLAQLVSITPDNPQVPALQMRQKSLKKEIDEQTRQLSGNGNSAATQTADYQRLMLANELAQQQLAAAMTSLQNTRGEADRQQLYLEVISQPSKPDWALEPSRIYNIIATFIIGLMLYGVLNLLIASIREHKN.

2 helical membrane passes run 23–43 (LFGL…GLFA) and 351–371 (IIAT…LIAS).

This sequence belongs to the BexC/CtrB/KpsE family.

It is found in the cell inner membrane. May form an ATP-driven capsule polysaccharide export apparatus, in association with the BexA, BexB and BexD proteins. The sequence is that of Capsule polysaccharide export inner-membrane protein BexC (bexC) from Haemophilus influenzae.